The following is a 189-amino-acid chain: Keratin-associated protein 5-2 (189 aa).

8 consecutive repeat copies span residues 21–24 (CCKP), 27–30 (CCKP), 33–36 (CCVP), 134–137 (CCKP), 144–147 (CCKP), 159–162 (CCKP), 169–172 (CCKP), and 179–182 (CCAP). Residues 27–182 (CCKPVCCCVP…CCCQSSCCAP (156 aa)) form an 8 X 4 AA repeats of C-C-X-P region.

Belongs to the KRTAP type 5 family. As to quaternary structure, interacts with hair keratins.

In the hair cortex, hair keratin intermediate filaments are embedded in an interfilamentous matrix, consisting of hair keratin-associated protein (KRTAP), which are essential for the formation of a rigid and resistant hair shaft through their extensive disulfide bond cross-linking with abundant cysteine residues of hair keratins. The matrix proteins include the high-sulfur and high-glycine-tyrosine keratins. This chain is Keratin-associated protein 5-2, found in Mus musculus (Mouse).